Reading from the N-terminus, the 434-residue chain is BEN domain-containing protein 7 (434 aa).

Glycyl lysine isopeptide (Lys-Gly) (interchain with G-Cter in SUMO2) cross-links involve residues Lys-16, Lys-56, and Lys-85. Disordered regions lie at residues 96–151 and 212–262; these read PQRS…SNGE and SRKR…ERTS. Positions 97–150 are enriched in polar residues; the sequence is QRSNSSTEASQGLHSNSRGAWNELPTQSGQFSGQSGPRSRTFQTQPHISASSNG. The segment covering 212–222 has biased composition (basic residues); that stretch reads SRKRNKKKKVL. A Glycyl lysine isopeptide (Lys-Gly) (interchain with G-Cter in SUMO2) cross-link involves residue Lys-244. In terms of domain architecture, BEN spans 289-399; the sequence is GFDVFMPKSQ…RRLKRGSAEV (111 aa). Position 326 is a phosphothreonine (Thr-326). The residue at position 330 (Ser-330) is a Phosphoserine. The segment at 414–434 is disordered; it reads TGHTFVIKRETPEDPEPGSVA.

The polypeptide is BEN domain-containing protein 7 (Bend7) (Mus musculus (Mouse)).